Reading from the N-terminus, the 71-residue chain is Omega-conotoxin-like Ac6.4 (71 aa).

Positions 1–22 (MKLTCVVIVAVLLLTACQLLTA) are cleaved as a signal peptide. The propeptide occupies 23–45 (DDSRGTQKHRALRSDTKLSMSTR). 3 disulfides stabilise this stretch: Cys46-Cys61, Cys53-Cys65, and Cys60-Cys70. Cysteine amide is present on Cys70.

Belongs to the conotoxin O1 superfamily. In terms of tissue distribution, expressed by the venom duct.

It is found in the secreted. Its function is as follows. Omega-conotoxins act at presynaptic membranes, they bind and block voltage-gated calcium channels (Cav). The protein is Omega-conotoxin-like Ac6.4 of Conus achatinus (Little frog cone).